The chain runs to 314 residues: tRNA pseudouridine synthase B (314 aa).

Histidine 43 contributes to the substrate binding site. Aspartate 48 functions as the Nucleophile in the catalytic mechanism. Tyrosine 76, tyrosine 179, and leucine 200 together coordinate substrate.

Belongs to the pseudouridine synthase TruB family. Type 1 subfamily.

The enzyme catalyses uridine(55) in tRNA = pseudouridine(55) in tRNA. Its function is as follows. Responsible for synthesis of pseudouridine from uracil-55 in the psi GC loop of transfer RNAs. The chain is tRNA pseudouridine synthase B from Escherichia coli O157:H7.